The primary structure comprises 341 residues: Dihydroorotate dehydrogenase (quinone) (341 aa).

FMN contacts are provided by residues 61 to 65 and threonine 85; that span reads AGLDK. Lysine 65 lines the substrate pocket. 110 to 114 serves as a coordination point for substrate; it reads NRMGF. Residues asparagine 138 and asparagine 171 each contribute to the FMN site. Asparagine 171 is a substrate binding site. The active-site Nucleophile is the serine 174. Asparagine 176 is a binding site for substrate. FMN contacts are provided by lysine 216 and threonine 244. 245-246 contacts substrate; sequence NT. FMN is bound by residues glycine 267, glycine 296, and 317 to 318; that span reads YS.

This sequence belongs to the dihydroorotate dehydrogenase family. Type 2 subfamily. As to quaternary structure, monomer. FMN serves as cofactor.

It localises to the cell membrane. The enzyme catalyses (S)-dihydroorotate + a quinone = orotate + a quinol. It participates in pyrimidine metabolism; UMP biosynthesis via de novo pathway; orotate from (S)-dihydroorotate (quinone route): step 1/1. Functionally, catalyzes the conversion of dihydroorotate to orotate with quinone as electron acceptor. In Pseudomonas putida (strain GB-1), this protein is Dihydroorotate dehydrogenase (quinone).